The sequence spans 981 residues: Colossin-C (981 aa).

A signal peptide spans 1–23; it reads MKILYSLLLISSIILNTVLNISS. A glycan (N-linked (GlcNAc...) asparagine) is linked at Asn63. The disordered stretch occupies residues 172–195; sequence EQTQPPTQPPTQPPTQPPTPPPFT. The span at 177–194 shows a compositional bias: pro residues; it reads PTQPPTQPPTQPPTPPPF. Residues Asn222, Asn591, and Asn811 are each glycosylated (N-linked (GlcNAc...) asparagine).

This sequence belongs to the serine-aspartate repeat-containing protein (SDr) family.

Its subcellular location is the secreted. The chain is Colossin-C (colC) from Dictyostelium discoideum (Social amoeba).